The chain runs to 165 residues: Lipoprotein signal peptidase (165 aa).

A run of 3 helical transmembrane segments spans residues 12-32 (WLWVVVAVLIIDLGSKFLILQ), 70-90 (WFFAGIAVGICVVLAVLMYRS), and 102-122 (ALIIGGALGNLFDRLWHGFVV). Active-site residues include Asp123 and Asp141. Residues 137–157 (FNLADSAICIGAALIVLEGFL) traverse the membrane as a helical segment.

This sequence belongs to the peptidase A8 family.

The protein resides in the cell inner membrane. The enzyme catalyses Release of signal peptides from bacterial membrane prolipoproteins. Hydrolyzes -Xaa-Yaa-Zaa-|-(S,diacylglyceryl)Cys-, in which Xaa is hydrophobic (preferably Leu), and Yaa (Ala or Ser) and Zaa (Gly or Ala) have small, neutral side chains.. Its pathway is protein modification; lipoprotein biosynthesis (signal peptide cleavage). In terms of biological role, this protein specifically catalyzes the removal of signal peptides from prolipoproteins. This Klebsiella aerogenes (strain ATCC 13048 / DSM 30053 / CCUG 1429 / JCM 1235 / KCTC 2190 / NBRC 13534 / NCIMB 10102 / NCTC 10006 / CDC 819-56) (Enterobacter aerogenes) protein is Lipoprotein signal peptidase.